A 1277-amino-acid chain; its full sequence is Protein FAM83H (1277 aa).

A compositionally biased stretch (polar residues) spans 1-12; it reads MARRSQSSSQGE. Disordered regions lie at residues 1 to 20, 67 to 98, 717 to 756, 772 to 805, 971 to 1018, 1070 to 1130, 1158 to 1225, and 1247 to 1266; these read MARRSQSSSQGENPLDPNYL, SLQRPPESGQENPYPDSVYGSQEDADGSSGTY, FGSTGDLSVEKAKENPPAEKEKEEGLLSRHDSFRTRTNPL, SKLEQHTSTAESVQEMQKEQSTSELVSENETGRT, EQTS…NSAF, KAEE…SRLS, QKNR…RDIL, and KKDEQPSHADDNDDKKAGKI. A compositionally biased stretch (basic and acidic residues) spans 724 to 750; that stretch reads SVEKAKENPPAEKEKEEGLLSRHDSFR. Polar residues-rich tracts occupy residues 777–805, 971–982, 993–1015, and 1112–1130; these read HTSTAESVQEMQKEQSTSELVSENETGRT, EQTSSTIQTIGN, SGPTITEVTEATQSSENLPTRPN, and KSLSVSPPKTSSISQSRLS. Residues 1204 to 1215 are compositionally biased toward low complexity; it reads SFLSRSRFSRPS. Residues 1247-1263 show a composition bias toward basic and acidic residues; sequence KKDEQPSHADDNDDKKA.

This sequence belongs to the FAM83 family.

It localises to the cytoplasm. The protein localises to the cytoskeleton. May play a role in keratin cytoskeleton disassembly. The sequence is that of Protein FAM83H from Xenopus tropicalis (Western clawed frog).